The primary structure comprises 369 residues: H-2 class I histocompatibility antigen, K-B alpha chain (369 aa).

The N-terminal stretch at 1 to 21 (MVPCTLLLLLAAALAPTQTRA) is a signal peptide. The tract at residues 22–111 (GPHSLRYFVT…LLGYYNQSKG (90 aa)) is alpha-1. Residues 22–305 (GPHSLRYFVT…EPPPSTVSNM (284 aa)) are Extracellular-facing. N-linked (GlcNAc...) asparagine glycosylation occurs at Asn-107. Residues 112-203 (GSHTIQVISG…KNGNATLLRT (92 aa)) form an alpha-2 region. A disulfide bridge connects residues Cys-122 and Cys-185. An N-linked (GlcNAc...) asparagine glycan is attached at Asn-197. The tract at residues 204 to 295 (DSPKAHVTHH…GLPEPLTLRW (92 aa)) is alpha-3. Residues 206 to 294 (PKAHVTHHSR…QGLPEPLTLR (89 aa)) enclose the Ig-like C1-type domain. A disulfide bridge links Cys-224 with Cys-280. A connecting peptide region spans residues 296–305 (EPPPSTVSNM). A helical transmembrane segment spans residues 306 to 328 (ATVAVLVVLGAAIVTGAVVAFVM). Residues 329-369 (KMRRRNTGGKGGDYALAPGSQTSDLSLPDCKVMVHDPHSLA) are Cytoplasmic-facing. Ser-351 and Ser-354 each carry phosphoserine.

The protein belongs to the MHC class I family. Heterodimer of an alpha chain and a beta chain (beta-2-microglobulin).

The protein localises to the membrane. In terms of biological role, involved in the presentation of foreign antigens to the immune system. The chain is H-2 class I histocompatibility antigen, K-B alpha chain (H2-K1) from Mus musculus (Mouse).